We begin with the raw amino-acid sequence, 114 residues long: Ribonuclease P protein component (114 aa).

It belongs to the RnpA family. Consists of a catalytic RNA component (M1 or rnpB) and a protein subunit.

The enzyme catalyses Endonucleolytic cleavage of RNA, removing 5'-extranucleotides from tRNA precursor.. Functionally, RNaseP catalyzes the removal of the 5'-leader sequence from pre-tRNA to produce the mature 5'-terminus. It can also cleave other RNA substrates such as 4.5S RNA. The protein component plays an auxiliary but essential role in vivo by binding to the 5'-leader sequence and broadening the substrate specificity of the ribozyme. This is Ribonuclease P protein component from Alkaliphilus oremlandii (strain OhILAs) (Clostridium oremlandii (strain OhILAs)).